Consider the following 77-residue polypeptide: U8-lycotoxin-Ls1l (77 aa).

An N-terminal signal peptide occupies residues 1 to 20; it reads MKLMIFTGLVLFAIVSLIEA. Positions 21 to 26 are excised as a propeptide; sequence QAENEK.

The protein belongs to the neurotoxin 19 (CSTX) family. 08 (U8-Lctx) subfamily. Post-translationally, contains 4 disulfide bonds. Expressed by the venom gland.

The protein localises to the secreted. This Lycosa singoriensis (Wolf spider) protein is U8-lycotoxin-Ls1l.